The chain runs to 628 residues: Huntingtin-associated protein 1 (628 aa).

Disordered regions lie at residues 1–62 and 212–264; these read MRPK…TKTG and YSDS…AHRC. A compositionally biased stretch (pro residues) spans 32-44; sequence GPAPEPSAEPKPA. Residues 52–62 are compositionally biased toward polar residues; that stretch reads GQKSGSRTKTG. The HAP1 N-terminal domain maps to 79–403; the sequence is RYVFQGPYGP…EDGKSHRQRS (325 aa). The tract at residues 152–319 is sufficient for interaction with KIF5B; the sequence is LLEEKERDLN…SEASQQMAEL (168 aa). The segment at 157-261 is interaction with TBP; that stretch reads ERDLNTAARI…PKPHPKAETA (105 aa). 2 coiled-coil regions span residues 168–301 and 327–367; these read QSLV…EQML and LEGY…MLAS. Positions 214–235 are enriched in acidic residues; that stretch reads DSDDDDDEEDEEDEEEGEEEER. Positions 236 to 248 are enriched in basic and acidic residues; sequence EGQRDQDQQHDHP. Residues 276–444 are sufficient for self-association and interaction with HD; sequence LLEEENDHLR…TSLRKFITDP (169 aa). Disordered regions lie at residues 372-411, 451-529, and 562-628; these read HSES…GSVT, RDTH…VDET, and QDAH…SGAT. Composition is skewed to basic and acidic residues over residues 387-398 and 451-464; these read SRPRDRQEDGKS and RDTH…KEQR. Residues 473–582 form an interaction with TBP region; the sequence is DLKPPEDFEA…KVVPKDSPTP (110 aa). 2 stretches are compositionally biased toward acidic residues: residues 479-494 and 504-527; these read DFEA…ELGA and GQAE…PEVD. Arg598 carries the post-translational modification Phosphothreonine. Positions 605-622 are enriched in basic and acidic residues; sequence QRLEEDRATHSPSAREEE.

In terms of assembly, self-associates. Interacts with HTT/huntingtin; enhanced by an expanded polyglutamine repeat within HTT. Isoform A interacts with DCTN1; decreased in presence of HTT with expanded polyglutamine repeat; decreased by phosphorylation of Hap1 isoform A at Thr-598. Isoform A interacts with KLC2; decreased by phosphorylation of Hap1 isoform A at Thr-598. Isoform A interacts with ITPR1 and APP. Isoform A interacts with AR; decreased by an expanded polyglutamine repeat within AR. Isoform A interacts with YWHAZ; enhanced by phosphorylation of Hap1 isoform A at Thr-598. Isoform A interacts with BDNF and SORT1; probably forming a complex involved in proBDNF trafficking, degradation and processing. Interacts with TBP, AHI1, HGS and KALRN. Interacts with KIF5A, KIF5B, KIF5C and GABRB3; indicative for an HAP1:KIF5 complex transporting a GABA(A) receptor as cargo. Interacts with ATXN3; in STBs. Interacts with NTRK2; HAP1 stabilizes association of NTRK2 with SORT1 preventing NTRK2 degradation. Interacts with CFAP263. Post-translationally, isoform A is phosphorylated on Thr-598.

The protein localises to the cytoplasm. Its subcellular location is the presynapse. The protein resides in the cytoskeleton. It localises to the cell projection. It is found in the dendritic spine. The protein localises to the dendrite. Its subcellular location is the axon. The protein resides in the lysosome. It localises to the endoplasmic reticulum. It is found in the mitochondrion. The protein localises to the nucleus. Its subcellular location is the cytoplasmic vesicle. The protein resides in the autophagosome. It localises to the early endosome. It is found in the growth cone. The protein localises to the neuron projection. Its subcellular location is the secretory vesicle. The protein resides in the synaptic vesicle. Originally identified as neuronal protein that specifically associates with HTT/huntingtin and the binding is enhanced by an expanded polyglutamine repeat within HTT possibly affecting HAP1 interaction properties. Both HTT and HAP1 are involved in intracellular trafficking and HAP1 is proposed to link HTT to motor proteins and/or transport cargos. Seems to play a role in vesicular transport within neurons and axons such as from early endosomes to late endocytic compartments and to promote neurite outgrowth. The vesicular transport function via association with microtubule-dependent transporters can be attenuated by association with mutant HTT. Involved in the axonal transport of BDNF and its activity-dependent secretion; the function seems to involve HTT, DCTN1 and a complex with SORT1. Involved in APP trafficking and seems to facilitate APP anterograde transport and membrane insertion thereby possibly reducing processing into amyloid beta. Involved in delivery of gamma-aminobutyric acid (GABA(A)) receptors to synapses; the function is dependent on kinesin motor protein KIF5 and is disrupted by HTT with expanded polyglutamine repeat. Involved in regulation of autophagosome motility by promoting efficient retrograde axonal transport. Seems to be involved in regulation of membrane receptor recycling and degradation, and respective signal transduction, including GABA(A) receptors, tyrosine kinase receptors, EGFR, IP3 receptor and androgen receptor. Among others suggested to be involved in control of feeding behavior (involving hypothalamic GABA(A) receptors), cerebellar and brainstem development (involving AHI1 and NTRK1/TrkA), postnatal neurogenesis (involving hypothalamic NTRK2/TrkB regulating the number of Npyr1-expressing cells), and ITPR1/InsP3R1-mediated Ca(2+) release (involving HTT and possibly the effect of mutant HTT). Via association with DCTN1/dynactin p150-glued and HTT/huntingtin involved in cytoplasmic retention of REST in neurons. May be involved in ciliogenesiss; however, reports are conflicting: PubMed:21985783 reports that Hap1 is required for ciliogenesis in primary cortical neurons and proposes that HTT interacts with PCM1 through HAP1; PubMed:23532844 reports that mice with disrupted Hap1 display normal cilium formation and function. Involved in regulation of exocytosis. Isoform A but not isoform B seems to be involved in formation of cytoplasmic inclusion bodies (STBs). In case of anomalous expression of TBP, can sequester a subset of TBP into STBs; sequestration is enhanced by an expanded polyglutamine repeat within TBP. This Mus musculus (Mouse) protein is Huntingtin-associated protein 1 (Hap1).